The sequence spans 561 residues: Mercuric reductase (561 aa).

The HMA domain maps to methionine 1–threonine 65. A metal cation-binding residues include cysteine 11 and cysteine 14. FAD is bound by residues alanine 110, glycine 130, and threonine 135. Cysteine 136 and cysteine 141 are oxidised to a cystine. FAD-binding residues include lysine 145, alanine 211, aspartate 403, and valine 411. Positions 558 and 559 each coordinate Hg(2+).

The protein belongs to the class-I pyridine nucleotide-disulfide oxidoreductase family. As to quaternary structure, homodimer. FAD serves as cofactor.

The enzyme catalyses Hg + NADP(+) + H(+) = Hg(2+) + NADPH. Its function is as follows. Resistance to Hg(2+) in bacteria appears to be governed by a specialized system which includes mercuric reductase. MerA protein is responsible for volatilizing mercury as Hg(0). This Enterobacter agglomerans (Erwinia herbicola) protein is Mercuric reductase (merA).